Consider the following 160-residue polypeptide: Endoribonuclease YbeY (160 aa).

Zn(2+) is bound by residues His123, His127, and His133.

This sequence belongs to the endoribonuclease YbeY family. Zn(2+) serves as cofactor.

It localises to the cytoplasm. In terms of biological role, single strand-specific metallo-endoribonuclease involved in late-stage 70S ribosome quality control and in maturation of the 3' terminus of the 16S rRNA. This is Endoribonuclease YbeY from Shouchella clausii (strain KSM-K16) (Alkalihalobacillus clausii).